The sequence spans 275 residues: Mitochondrial prohibitin complex protein 1 (275 aa).

The stretch at 180–213 (REFTEAVEMKQVAQQEAEKARYLVEKAEQMKIAA) forms a coiled coil.

Belongs to the prohibitin family. High molecular weight complex that consist of phb-1 and phb-2.

It localises to the mitochondrion inner membrane. Its function is as follows. PHB proteins are essential during embryonic development and are required for somatic and germline differentiation in the larval gonad. A deficiency in PHB proteins results in altered mitochondrial biogenesis in body wall muscle cells. This is Mitochondrial prohibitin complex protein 1 (phb-1) from Caenorhabditis elegans.